Reading from the N-terminus, the 253-residue chain is 5'-nucleotidase SurE (253 aa).

A divalent metal cation-binding residues include Asp-8, Asp-9, Ser-39, and Asn-95.

Belongs to the SurE nucleotidase family. A divalent metal cation serves as cofactor.

Its subcellular location is the cytoplasm. The enzyme catalyses a ribonucleoside 5'-phosphate + H2O = a ribonucleoside + phosphate. Functionally, nucleotidase that shows phosphatase activity on nucleoside 5'-monophosphates. This is 5'-nucleotidase SurE from Kosmotoga olearia (strain ATCC BAA-1733 / DSM 21960 / TBF 19.5.1).